The sequence spans 657 residues: MTQLAIGKPAPLGAHYDGQGVNFTLFSAHAERVELCVFDANGQEHRYDLPGHSGDIWHGYLPDARPGLRYGYRVHGPWQPAEGHRFNPAKLLIDPCARQIDGEFKDNPLLHAGHNEPDYRDNAAIAPKCVVVVDHYDWEDDAPPRTPWGSTIIYEAHVKGLTYLHPEIPVEIRGTYKALGHPVMINYLKQLGITALELLPVAQFASEPRLQRMGLSNYWGYNPVAMFALHPAYACSPETALDEFRDAIKALHKAGIEVILDIVLNHSAELDLDGPLFSLRGIDNRSYYWIREDGDYHNWTGCGNTLNLSHPAVVDYASACLRYWVETCHVDGFRFDLAAVMGRTPEFRQDAPLFTAIQNCPVLSQVKLIAEPWDIAPGGYQVGNFPPLFAEWNDHFRDAARRFWLHYDLPLGAFAGRFAASSDVFKRNGRLPSAAINLVTAHDGFTLRDCVCFNHKHNEANGEENRDGTNNNYSNNHGKEGLGGSLDLVERRRDSIHALLTTLLLSQGTPMLLAGDEHGHSQHGNNNAYCQDNQLTWLDWSQASSGLTAFTAALIHLRKRIPALVENRWWEEGDGNVRWLNRYAQPLSTDEWQNGPKQLQILLSDRFLIAINATLEVTEIVLPAGEWHAIPPFAGEDNPVITAVWQGPAHGLCVFQR.

Aspartate 336 functions as the Nucleophile in the catalytic mechanism. Glutamate 371 (proton donor) is an active-site residue. A compositionally biased stretch (basic and acidic residues) spans 458–467 (NEANGEENRD). The segment at 458-479 (NEANGEENRDGTNNNYSNNHGK) is disordered.

The protein belongs to the glycosyl hydrolase 13 family.

It catalyses the reaction Hydrolysis of (1-&gt;6)-alpha-D-glucosidic linkages to branches with degrees of polymerization of three or four glucose residues in limit dextrin.. The protein operates within glycan degradation; glycogen degradation. Removes maltotriose and maltotetraose chains that are attached by 1,6-alpha-linkage to the limit dextrin main chain, generating a debranched limit dextrin. The protein is Glycogen debranching enzyme of Escherichia coli (strain K12 / DH10B).